A 590-amino-acid polypeptide reads, in one-letter code: V-type ATP synthase alpha chain (590 aa).

231–238 contacts ATP; it reads GPFGSGKT.

This sequence belongs to the ATPase alpha/beta chains family.

It carries out the reaction ATP + H2O + 4 H(+)(in) = ADP + phosphate + 5 H(+)(out). Its function is as follows. Produces ATP from ADP in the presence of a proton gradient across the membrane. The V-type alpha chain is a catalytic subunit. In Clostridium botulinum (strain Langeland / NCTC 10281 / Type F), this protein is V-type ATP synthase alpha chain.